The primary structure comprises 304 residues: Mycothiol acetyltransferase (304 aa).

N-acetyltransferase domains lie at 16–155 and 164–304; these read AHVE…RTGL and VALS…YRRA. Glu46 serves as a coordination point for 1D-myo-inositol 2-(L-cysteinylamino)-2-deoxy-alpha-D-glucopyranoside. Acetyl-CoA is bound at residue 87–89; sequence LVV. Residues Glu190, Lys230, and Glu237 each coordinate 1D-myo-inositol 2-(L-cysteinylamino)-2-deoxy-alpha-D-glucopyranoside. Residues 241–243 and 248–254 each bind acetyl-CoA; these read LGV and AARGLGS. A 1D-myo-inositol 2-(L-cysteinylamino)-2-deoxy-alpha-D-glucopyranoside-binding site is contributed by Tyr275.

This sequence belongs to the acetyltransferase family. MshD subfamily. In terms of assembly, monomer.

It catalyses the reaction 1D-myo-inositol 2-(L-cysteinylamino)-2-deoxy-alpha-D-glucopyranoside + acetyl-CoA = mycothiol + CoA + H(+). Its function is as follows. Catalyzes the transfer of acetyl from acetyl-CoA to desacetylmycothiol (Cys-GlcN-Ins) to form mycothiol. This is Mycothiol acetyltransferase from Clavibacter sepedonicus (Clavibacter michiganensis subsp. sepedonicus).